A 98-amino-acid polypeptide reads, in one-letter code: Prostate and testis expressed protein 3 (98 aa).

A signal peptide spans methionine 1–serine 20. The UPAR/Ly6 domain maps to leucine 21–lysine 97. 4 cysteine pairs are disulfide-bonded: cysteine 23/cysteine 50, cysteine 26/cysteine 35, cysteine 42/cysteine 68, and cysteine 72/cysteine 88.

Belongs to the PATE family. As to expression, specifically expressed in prostate and testis.

Its subcellular location is the secreted. The protein is Prostate and testis expressed protein 3 (PATE3) of Homo sapiens (Human).